A 78-amino-acid chain; its full sequence is RNA-binding protein Hfq (78 aa).

The region spanning 10–69 (DPFLNTLRKEHVPVSIYLVNGIKLQGQIESFDQYVVLLRNTVTQMVYKHAISTVVPARAV) is the Sm domain.

It belongs to the Hfq family. As to quaternary structure, homohexamer.

RNA chaperone that binds small regulatory RNA (sRNAs) and mRNAs to facilitate mRNA translational regulation in response to envelope stress, environmental stress and changes in metabolite concentrations. Also binds with high specificity to tRNAs. This Bordetella bronchiseptica (strain ATCC BAA-588 / NCTC 13252 / RB50) (Alcaligenes bronchisepticus) protein is RNA-binding protein Hfq.